Reading from the N-terminus, the 524-residue chain is Acetyl-CoA hydrolase (524 aa).

Position 275–279 (275–279 (GIGNI)) interacts with CoA. Glutamate 300 functions as the 5-glutamyl coenzyme A thioester intermediate in the catalytic mechanism. 2 residues coordinate CoA: asparagine 390 and glycine 394.

It belongs to the acetyl-CoA hydrolase/transferase family.

The protein resides in the cytoplasm. The enzyme catalyses acetyl-CoA + H2O = acetate + CoA + H(+). In terms of biological role, presumably involved in regulating the intracellular acetyl-CoA pool for fatty acid and cholesterol synthesis and fatty acid oxidation. This chain is Acetyl-CoA hydrolase (ACH1), found in Candida albicans (strain SC5314 / ATCC MYA-2876) (Yeast).